The primary structure comprises 686 residues: X-linked interleukin-1 receptor accessory protein-like 2 (686 aa).

The signal sequence occupies residues 1-16 (MKLPLLLALVVCSAVS). Over 17 to 354 (TNLKMVSKRN…LLRKKDLIYK (338 aa)) the chain is Extracellular. In terms of domain architecture, Ig-like C2-type 1 spans 32 to 132 (IDWSVDLKTY…YCMKVSMSLT (101 aa)). A disulfide bridge connects residues Cys53 and Cys116. N-linked (GlcNAc...) asparagine glycosylation is found at Asn63, Asn120, Asn136, Asn211, and Asn328. Ig-like C2-type domains follow at residues 141–232 (CYNS…LKVT) and 239–347 (PPKP…VLLR). Cystine bridges form between Cys162–Cys214 and Cys265–Cys331. The helical transmembrane segment at 355–375 (IELAGGLGAIFLLLILLLVVY) threads the bilayer. Residues 376–686 (KCYNIELMLF…KELSFTSDIW (311 aa)) are Cytoplasmic-facing. Residues 400-556 (KEYDAYLSYT…KFWKHLVYEM (157 aa)) form the TIR domain. The active site involves Glu488.

Belongs to the interleukin-1 receptor family. Detected in fetal brain after day 12.5, in particular in parts of the diencephalon and in the basal plate of the spinal cord. In postnatal brain detected in cerebral cortex, olfactory bulb, in the CA1 region of the hippocampus and in Purkinje cells of the Xth cerebellar lobule.

The protein localises to the membrane. It catalyses the reaction NAD(+) + H2O = ADP-D-ribose + nicotinamide + H(+). The protein is X-linked interleukin-1 receptor accessory protein-like 2 (Il1rapl2) of Mus musculus (Mouse).